The primary structure comprises 231 residues: MVVEDTQKSSITDDQITANPNNENEDLEEGEILDDDDSSATSRPPSSSGALARNPHPLENSWTFWFDNPSAKSKQAAWGSSIRPIYTFATVEEFWSIYNNIHHPSKLAVGADFHCFKHKIEPKWEDPICANGGKWTMTFPRGKSDTSWLYTLLGMIGEQFDHGDEICGAVVNVRNRQEKIALWTKNAANEAAQVSIGKQWKEFLDYNDTIGFIFHEDAKKHDRAAKNKYVI.

A disordered region spans residues 1 to 55 (MVVEDTQKSSITDDQITANPNNENEDLEEGEILDDDDSSATSRPPSSSGALARNP). A compositionally biased stretch (polar residues) spans 8–18 (KSSITDDQITA). A compositionally biased stretch (acidic residues) spans 23-38 (ENEDLEEGEILDDDDS). Over residues 39–48 (SATSRPPSSS) the composition is skewed to low complexity. 2 EIF4G-binding regions span residues 56–59 (HPLE) and 66–102 (FDNP…NNIH). MRNA is bound by residues 74–79 (KQAAWG), Lys106, and 124–125 (WE). Cys129 and Cys167 are oxidised to a cystine. The tract at residues 150 to 159 (YTLLGMIGEQ) is EIF4G-binding. MRNA contacts are provided by residues 174 to 179 (RNRQEK) and 219 to 223 (KKHDR).

It belongs to the eukaryotic initiation factor 4E family. As to quaternary structure, EIF4F is a multi-subunit complex, the composition of which varies with external and internal environmental conditions. It is composed of at least EIF4A, EIF4E and EIF4G. EIF4E is also known to interact with other partners. In higher plants two isoforms of EIF4F have been identified, named isoform EIF4F and isoform EIF(iso)4F. Isoform EIF4F has subunits p220 and p26, whereas isoform EIF(iso)4F has subunits p82 and p28. In terms of assembly, (Microbial infection) Interacts with potyvirus peanut stripe virus (PStV) helper component proteinase (HC-Pro) in the cytoplasm and with PStV viral genome-linked protein (VPg) in the nucleus; these interactions are possible in susceptible hosts but impaired in resistant plants. Post-translationally, according to the redox status, the Cys-129-Cys-167 disulfide bridge may have a role in regulating protein function by affecting its ability to bind capped mRNA. Expressed ubiquitously with highest levels in young leaves and roots, and lowest levels in flowers.

The protein resides in the nucleus. It localises to the cytoplasm. Functionally, component of the protein complex eIF4F, which is involved in the recognition of the mRNA cap, ATP-dependent unwinding of 5'-terminal secondary structure and recruitment of mRNA to the ribosome. Recognizes and binds the 7-methylguanosine-containing mRNA cap during an early step in the initiation of protein synthesis and facilitates ribosome binding by inducing the unwinding of the mRNAs secondary structures. Key component of recessive resistance to potyviruses such as peanut stripe virus (PStV). (Microbial infection) Susceptibility host factor required for viral infection by recruiting viral RNAs to the host ribosomal complex via an interaction with viral genome-linked protein (VPg). The protein is Eukaryotic translation initiation factor 4E-1 of Arachis hypogaea (Peanut).